Here is a 416-residue protein sequence, read N- to C-terminus: Phosphatidylinositol 5-phosphate 4-kinase type-2 beta (416 aa).

An N-acetylserine modification is found at Ser2. Thr8 is subject to Phosphothreonine. Ser19 carries the phosphoserine modification. In terms of domain architecture, PIPK spans 38–415 (ASEPILSVLM…RFNEFMSNIL (378 aa)). Residues 64–70 (VMLMPDD) are required for interaction with PIP5K1A. 2 positions are modified to N6-acetyllysine: Lys94 and Lys150. ATP-binding positions include 202 to 204 (RNV) and Lys214. GTP contacts are provided by residues 203–204 (NV) and Lys214. A Phosphothreonine modification is found at Thr322. Ser326 carries the post-translational modification Phosphoserine. Asp369 provides a ligand contact to GTP.

As to quaternary structure, homodimer. Binds TNFRSF1A. Interacts with PIP4K2A; the interaction suppresses ubiquitination by the SPOP/CUL3 complex. Probably interacts with PIP5K1A; the interaction inhibits PIP5K1A kinase activity. In terms of processing, ubiquitinated by the SPOP/CUL3 complex. Ubiquitination is stimulated by PtdIns5P levels. Phosphorylated on serine residues.

The protein resides in the endoplasmic reticulum membrane. Its subcellular location is the cell membrane. The protein localises to the nucleus. It localises to the cytoplasm. The catalysed reaction is a 1,2-diacyl-sn-glycero-3-phospho-(1D-myo-inositol-5-phosphate) + ATP = a 1,2-diacyl-sn-glycero-3-phospho-(1D-myo-inositol-4,5-bisphosphate) + ADP + H(+). The enzyme catalyses 1,2-dihexadecanoyl-sn-glycero-3-phospho-(1D-myo-inositol-5-phosphate) + ATP = 1,2-dihexadecanoyl-sn-glycero-3-phospho-(1D-myo-inositol-4,5-bisphosphate) + ADP + H(+). It catalyses the reaction 1,2-dihexadecanoyl-sn-glycero-3-phospho-(1D-myo-inositol-5-phosphate) + GTP = 1,2-dihexadecanoyl-sn-glycero-3-phospho-(1D-myo-inositol-4,5-bisphosphate) + GDP + H(+). In terms of biological role, participates in the biosynthesis of phosphatidylinositol 4,5-bisphosphate. Preferentially utilizes GTP, rather than ATP, for PI(5)P phosphorylation and its activity reflects changes in direct proportion to the physiological GTP concentration. Its GTP-sensing activity is critical for metabolic adaptation. In collaboration with PIP4K2A, has a role in mediating autophagy in times of nutrient stress. Required for autophagosome-lysosome fusion and the regulation of cellular lipid metabolism. PIP4Ks negatively regulate insulin signaling through a catalytic-independent mechanism. They interact with PIP5Ks and suppress PIP5K-mediated PtdIns(4,5)P2 synthesis and insulin-dependent conversion to PtdIns(3,4,5)P3. The chain is Phosphatidylinositol 5-phosphate 4-kinase type-2 beta from Mus musculus (Mouse).